The primary structure comprises 441 residues: Velvet complex subunit B (441 aa).

Residues 1 to 173 enclose the Velvet domain; that stretch reads MSTLGQGDFE…SDQGVRLRLR (173 aa). 3 disordered regions span residues 200–220, 234–295, and 341–396; these read GYLP…PHHL, RSRS…ETDT, and MPSP…PSYA. 2 stretches are compositionally biased toward low complexity: residues 272-283 and 361-375; these read DGASPDSPHPSS and PAGA…FSPG.

Belongs to the velvet family. VelB subfamily. In terms of assembly, component of the heterotrimeric velvet complex composed of laeA, veA and velB; VeA acting as a bridging protein between laeA and velB.

It is found in the nucleus. It localises to the cytoplasm. In terms of biological role, component of the velvet transcription factor complex that controls sexual/asexual developmental ratio in response to light, promoting sexual development in the darkness while stimulating asexual sporulation under illumination. The velvet complex acts as a global regulator for secondary metabolite gene expression and is required for the production of chaetoglobosin A. The polypeptide is Velvet complex subunit B (Chaetomium globosum (strain ATCC 6205 / CBS 148.51 / DSM 1962 / NBRC 6347 / NRRL 1970) (Soil fungus)).